The sequence spans 444 residues: Glycerol-3-phosphate transporter (444 aa).

The Cytoplasmic portion of the chain corresponds to 1-36 (MLNIFKPAPHIERLDDSKMDAAYKRLRLQVFIGIFI). The helical transmembrane segment at 37 to 57 (GYAGYYLLRKNFAFAIPYLQE) threads the bilayer. Over 58–63 (QGFSKT) the chain is Extracellular. A helical transmembrane segment spans residues 64–84 (ELGLVLAAVSIAYGFSKFIMG). Topologically, residues 85–93 (MVSDRCNPR) are cytoplasmic. The chain crosses the membrane as a helical span at residues 94–112 (YFLATGLFLSAIVNILFVS). Residues 113–120 (MPWVTSSV) are Extracellular-facing. Residues 121-141 (TIMFIFMFINGWFQGMGWPPC) form a helical membrane-spanning segment. The Cytoplasmic portion of the chain corresponds to 142-160 (GRTMAHWFSISERGTKMSI). A helical membrane pass occupies residues 161–180 (WNVAHNIGGGILAPLVTLGI). Residues 181 to 189 (AMFVTWKSV) are Extracellular-facing. Residues 190 to 207 (FFFPAIIAIIISFLIVLL) form a helical membrane-spanning segment. The Cytoplasmic segment spans residues 208 to 261 (VRDTPQSCGLPPIEEYRNDYPKHAFKNQEKELTTKEILFQYVLNNKFLWYIAFA). A helical membrane pass occupies residues 262–282 (NVFVYFVRYGVVDWAPTYLTE). At 283-287 (AKGFS) the chain is on the extracellular side. A helical membrane pass occupies residues 288–308 (PEDSRWSYFLYEYAGIPGTIL). Over 309-321 (CGWISDRFFKSRR) the chain is Cytoplasmic. A helical transmembrane segment spans residues 322–341 (APAGVLFMAGVFIAVLVYWL). The Extracellular portion of the chain corresponds to 342–346 (NPAGN). Residues 347-368 (PLVDNIALISIGFLIYGPVMLI) form a helical membrane-spanning segment. Residues 369-387 (GLQAIDLAPKKAAGTAAGL) are Cytoplasmic-facing. The chain crosses the membrane as a helical span at residues 388-409 (TGFFGYIGGSAFANAIMGFVVD). Residues 410 to 414 (RFNWN) are Extracellular-facing. The chain crosses the membrane as a helical span at residues 415 to 435 (GGFIMLISSCILAIVFLALTW). Over 436 to 444 (NTGKRAEHV) the chain is Cytoplasmic.

Belongs to the major facilitator superfamily. Organophosphate:Pi antiporter (OPA) (TC 2.A.1.4) family.

The protein localises to the cell membrane. Its function is as follows. Responsible for glycerol-3-phosphate uptake. The polypeptide is Glycerol-3-phosphate transporter (glpT) (Bacillus subtilis (strain 168)).